The chain runs to 260 residues: Acetylglutamate kinase (260 aa).

Substrate contacts are provided by residues 46–47 (GG), Arg-68, and Asn-160.

This sequence belongs to the acetylglutamate kinase family. ArgB subfamily.

Its subcellular location is the cytoplasm. It catalyses the reaction N-acetyl-L-glutamate + ATP = N-acetyl-L-glutamyl 5-phosphate + ADP. The protein operates within amino-acid biosynthesis; L-arginine biosynthesis; N(2)-acetyl-L-ornithine from L-glutamate: step 2/4. Functionally, catalyzes the ATP-dependent phosphorylation of N-acetyl-L-glutamate. The sequence is that of Acetylglutamate kinase from Shewanella putrefaciens (strain CN-32 / ATCC BAA-453).